Here is a 473-residue protein sequence, read N- to C-terminus: tRNA-2-methylthio-N(6)-dimethylallyladenosine synthase (473 aa).

The MTTase N-terminal domain occupies 5–125 (RKLHIKSFGC…LPQLLAEAAR (121 aa)). [4Fe-4S] cluster contacts are provided by Cys-14, Cys-50, Cys-88, Cys-166, Cys-170, and Cys-173. One can recognise a Radical SAM core domain in the interval 152–384 (RARGISAFVT…QELIDSQQAA (233 aa)). A TRAM domain is found at 387 to 449 (AAVIGTTVEV…RYSLIGELAA (63 aa)). Positions 452 to 473 (QHSGFATRSEDSPQSLPITTGA) are disordered.

It belongs to the methylthiotransferase family. MiaB subfamily. Monomer. [4Fe-4S] cluster serves as cofactor.

Its subcellular location is the cytoplasm. It catalyses the reaction N(6)-dimethylallyladenosine(37) in tRNA + (sulfur carrier)-SH + AH2 + 2 S-adenosyl-L-methionine = 2-methylsulfanyl-N(6)-dimethylallyladenosine(37) in tRNA + (sulfur carrier)-H + 5'-deoxyadenosine + L-methionine + A + S-adenosyl-L-homocysteine + 2 H(+). In terms of biological role, catalyzes the methylthiolation of N6-(dimethylallyl)adenosine (i(6)A), leading to the formation of 2-methylthio-N6-(dimethylallyl)adenosine (ms(2)i(6)A) at position 37 in tRNAs that read codons beginning with uridine. The sequence is that of tRNA-2-methylthio-N(6)-dimethylallyladenosine synthase from Rhodopseudomonas palustris (strain BisB18).